A 413-amino-acid polypeptide reads, in one-letter code: MPRYCAASYCKNRGGQSARDQRKLSFYPFPLHDKERLEKWLRNMKRDAWTPSKHQLLCSDHFTPDSLDVRWGIRYLKHTAVPTIFSSPDDEEKGSSQNSPQEIRREDQEETTKNVESKKVPVSLELCTPKKSSVTAENPDKKAEVICSTVLSKSLQVQKLQLENREDFEADSIILDNSSQQHIHQPEPVLMAAAVQNVEATDVHASVEVPVSCTATVLQFSDPDYLNSSLKLKNTLGSITDYTLENPNSHVVGCSVEVQPATENAVLVNAVTQTIEQLSGSEESVIAIIVPAESPKEPEIINRSFLPIKQEFLDTEEAETDNSLHMNAYNGLEILQTEHSYCKQDIDREHLWQKISKLHSKITLLEMQEVKTLGRLRSLEALIGQLKQENLLSEEKLKIVENCFTTLEVTMIQ.

The segment at M1 to F85 adopts a THAP-type zinc-finger fold. The tract at residues I84–K118 is disordered. The span at E102 to K118 shows a compositional bias: basic and acidic residues. Residues R375–I399 adopt a coiled-coil conformation.

The protein localises to the nucleus. The chain is THAP domain-containing protein 5 (THAP5) from Gallus gallus (Chicken).